The chain runs to 75 residues: UPF0512 protein D (75 aa).

The tract at residues 1 to 20 is disordered; the sequence is MAIFKSISSISNSTGSMGSS.

Belongs to the UPF0512 family.

In Dictyostelium discoideum (Social amoeba), this protein is UPF0512 protein D.